The following is a 921-amino-acid chain: Protein translocase subunit SecA (921 aa).

ATP is bound by residues Gln85, 103–107, and Asp514; that span reads GEGKT. Zn(2+)-binding residues include Cys905, Cys907, Cys916, and His917.

The protein belongs to the SecA family. Monomer and homodimer. Part of the essential Sec protein translocation apparatus which comprises SecA, SecYEG and auxiliary proteins SecDF-YajC and YidC. Zn(2+) is required as a cofactor.

Its subcellular location is the cell inner membrane. The protein localises to the cytoplasm. It catalyses the reaction ATP + H2O + cellular proteinSide 1 = ADP + phosphate + cellular proteinSide 2.. Part of the Sec protein translocase complex. Interacts with the SecYEG preprotein conducting channel. Has a central role in coupling the hydrolysis of ATP to the transfer of proteins into and across the cell membrane, serving both as a receptor for the preprotein-SecB complex and as an ATP-driven molecular motor driving the stepwise translocation of polypeptide chains across the membrane. In Herminiimonas arsenicoxydans, this protein is Protein translocase subunit SecA.